A 726-amino-acid chain; its full sequence is ORC ubiquitin ligase 1 (726 aa).

Residues 18-56 (CHICLGKVRQPVICINNHVFCSICIDLWLKNNSQCPACR) form an RING-type; degenerate zinc finger. 2 coiled-coil regions span residues 87-129 (LRKT…TILD) and 155-270 (ETVA…MNSI). At serine 210 the chain carries Phosphoserine. Positions 274 to 335 (ALPADGKGSK…ARQESTSKAE (62 aa)) are disordered. The span at 280-290 (KGSKGSEEDVA) shows a compositional bias: basic and acidic residues. Over residues 300 to 320 (KQPSSSTSSSSHLAKPSSSRL) the composition is skewed to low complexity. Positions 321–334 (CDTSSARQESTSKA) are enriched in polar residues. Residues serine 526, serine 553, serine 561, serine 568, serine 570, serine 719, and serine 721 each carry the phosphoserine modification. The interval 687 to 726 (QSPWSTSFVPEKRNKNVNQSTKRKIQSSLSNASPSKATKS) is disordered. The segment covering 702–726 (NVNQSTKRKIQSSLSNASPSKATKS) has biased composition (polar residues).

Associates with ORC complex. Binds to chromatin; association is cell cycle-regulated, absent from mitotic chromosomes, is associated with chromatin from G1 and partially released from chromatin from mid S-phase. In terms of processing, auto-ubiquitinated.

It is found in the chromosome. It carries out the reaction S-ubiquitinyl-[E2 ubiquitin-conjugating enzyme]-L-cysteine + [acceptor protein]-L-lysine = [E2 ubiquitin-conjugating enzyme]-L-cysteine + N(6)-ubiquitinyl-[acceptor protein]-L-lysine.. E3 ubiquitin ligase essential for DNA replication origin activation during S phase. Acts as a replication origin selector which selects the origins to be fired and catalyzes the multi-mono-ubiquitination of a subset of chromatin-bound ORC3 and ORC5 during S-phase. The sequence is that of ORC ubiquitin ligase 1 (OBI1) from Pongo abelii (Sumatran orangutan).